A 350-amino-acid chain; its full sequence is Legumin K (350 aa).

2 disordered regions span residues 37-86 (LGGN…GNSV) and 102-170 (EEDT…RKNG). Basic and acidic residues-rich tracts occupy residues 104-118 (DTAK…ERSQ), 141-150 (EQSHSHSHRE), and 160-170 (EKQRSEERKNG). One can recognise a Cupin type-1 domain in the interval 182-329 (ENIADAAGAD…AFGLRQRQVT (148 aa)).

Belongs to the 11S seed storage protein (globulins) family. In terms of assembly, hexamer; each subunit is composed of an acidic and a basic chain derived from a single precursor and linked by a disulfide bond.

This protein found in the seeds of many leguminous and non-leguminous plants is the source of sulfur-containing amino acids in seed meals. This Pisum sativum (Garden pea) protein is Legumin K (LEGK).